The sequence spans 476 residues: ATP synthase subunit beta, chloroplastic (476 aa).

153 to 160 is an ATP binding site; that stretch reads GGAGVGKT.

This sequence belongs to the ATPase alpha/beta chains family. In terms of assembly, F-type ATPases have 2 components, CF(1) - the catalytic core - and CF(0) - the membrane proton channel. CF(1) has five subunits: alpha(3), beta(3), gamma(1), delta(1), epsilon(1). CF(0) has four main subunits: a(1), b(1), b'(1) and c(9-12).

The protein localises to the plastid. The protein resides in the chloroplast thylakoid membrane. The enzyme catalyses ATP + H2O + 4 H(+)(in) = ADP + phosphate + 5 H(+)(out). Functionally, produces ATP from ADP in the presence of a proton gradient across the membrane. The catalytic sites are hosted primarily by the beta subunits. This Dicksonia antarctica (Australian tree fern) protein is ATP synthase subunit beta, chloroplastic.